The primary structure comprises 803 residues: Rho guanine nucleotide exchange factor 7 (803 aa).

Methionine 1 is subject to N-acetylmethionine. The Calponin-homology (CH) domain maps to 1–133 (MNSAEQTVTW…SLVTLNKVTA (133 aa)). At asparagine 2 the chain carries N-acetylthreonine. A phosphoserine mark is found at serine 153 and serine 176. Residues 184–243 (NNQLVVRAKFNFQQTNEDELSFSKGDVIHVTRVEEGGWWEGTLNGRTGWFPSNYVREVKA) enclose the SH3 domain. Phosphoserine occurs at positions 249 and 257. Residues 271–451 (YYNVVLQNIL…KNLSAQCQEV (181 aa)) enclose the DH domain. Positions 473–578 (DIKTLGNVTY…WVEHLQKQTK (106 aa)) constitute a PH domain. A phosphoserine mark is found at serine 518, cysteine 560, and valine 579. The segment at 580–655 (TSVGNPTIKP…TPKPWSLSCL (76 aa)) is disordered. Residues 593–606 (PSHTLPSHPVTPSS) show a composition bias toward polar residues. Lysine 645 and serine 664 each carry phosphoserine. Residues 678–690 (KTMKKLLPKRKPE) show a composition bias toward basic residues. 2 disordered regions span residues 678-704 (KTMKKLLPKRKPERKPSDEEFASRKST) and 748-773 (DDQPSLDSLGRRSSLSRLEPSDLSED). Positions 691–700 (RKPSDEEFAS) are enriched in basic and acidic residues. Serine 694 is modified (phosphoserine; by CaMK1). Residues 752-765 (SLDSLGRRSSLSRL) are compositionally biased toward low complexity.

In terms of assembly, interacts with PAK kinases through the SH3 domain. Interacts with GIT1 and TGFB1I1. Interacts with PTK2/FAK1 and RAC1. Interacts with ITCH and PARVB. Interacts with unphosphorylated PAK1. Interacts with SCRIB; interaction is direct and may play a role in regulation of apoptosis. Interacts with FRMPD4 (via N-terminus). Interacts with CaMK1. Interacts with BIN2. Interacts with YWHAZ. Interacts (via PH domain) with NOX1 (via FAD-binding FR-type domain). Interacts with SNX27. Phosphorylated by PTK2/FAK1; this promotes interaction with RAC1. Phosphorylated on Ser-694 by CaMK1; enhancement of GEF activity and downstream activation of RAC1.

It is found in the cell junction. It localises to the focal adhesion. The protein resides in the cell projection. Its subcellular location is the ruffle. The protein localises to the cytoplasm. It is found in the cell cortex. It localises to the lamellipodium. Functionally, acts as a RAC1 guanine nucleotide exchange factor (GEF) and can induce membrane ruffling. Functions in cell migration, attachment and cell spreading. Promotes targeting of RAC1 to focal adhesions. May function as a positive regulator of apoptosis. Downstream of NMDA receptors and CaMKK-CaMK1 signaling cascade, promotes the formation of spines and synapses in hippocampal neurons. In Homo sapiens (Human), this protein is Rho guanine nucleotide exchange factor 7 (ARHGEF7).